The primary structure comprises 315 residues: MAFPEPKPRPPELPQKRLKTLDCGQGAVRAVRFNVDGNYCLTCGSDKTLKLWNPLRGTLLRTYSGHGYEVLDAAGSFDNSSLCSGGGDKAVVLWDVASGQVVRKFRGHAGKVNTVQFNEEATVILSGSIDSSIRCWDCRSRRPEPVQTLDEARDGVSSVKVSDHEILAGSVDGRVRRYDLRMGQLFSDYVGSPITCTCFSRDGQCTLVSSLDSTLRLLDKDTGELLGEYKGHKNQEYKLDCCLSERDTHVVSCSEDGKVFFWDLVEGALALALPVGSGVVQSLAYHPTEPCLLTAMGGSVQCWREEAYEAEDGAG.

7 WD repeats span residues 23–62, 65–104, 107–146, 151–188, 190–228, 231–272, and 275–313; these read CGQG…LLRT, GHGY…VVRK, GHAG…PEPV, EARD…LFSD, VGSP…LLGE, GHKN…LALA, and VGSG…AEDG.

The protein belongs to the WD repeat MORG1 family. In terms of assembly, interacts with EGLN3/PHD3. Interacts with ERK signaling proteins MAP2K1/MEK1, MAP2K2/MEK2, LAMTOR3, ARAF/Raf-1, MAPK1/ERK2 and MAPK3/ERK1. Identified in the spliceosome C complex. Interacts with PARD6B and CRB3. Interacts strongly with GTP-bound RRAGA but not with inactive GDP-bound. Interacts with p62/SQSTM1.

Its subcellular location is the cytoplasm. The protein resides in the lysosome. The protein localises to the nucleus. Its function is as follows. Molecular scaffold protein for various multimeric protein complexes. Acts as a module in the assembly of a multicomponent scaffold for the ERK pathway, linking ERK responses to specific agonists. At low concentrations it enhances ERK activation, whereas high concentrations lead to the inhibition of ERK activation. Also involved in response to hypoxia by acting as a negative regulator of HIF1A/HIF-1-alpha via its interaction with EGLN3/PHD3. May promote degradation of HIF1A. May act by recruiting signaling complexes to a specific upstream activator. May also be involved in pre-mRNA splicing. Participates in tight junction development by regulating apico-basal polarity, a key step in tissue development and organization. Mechanistically, regulates the translocation of PAR6-aPKC from the cytoplasm to the apical surface by acting as an adapter between PARD6B AND CRB3. Also acts as a negative regulator of mTORC1 under nutrient-rich conditions by binding to the active Rag GTPases to inhibit mTORC1 localization to the lysosome and phosphorylation of downstream targets. This facilitates constitutive basal autophagy during nutrient availability. The protein is WD repeat domain-containing protein 83 (WDR83) of Homo sapiens (Human).